A 471-amino-acid polypeptide reads, in one-letter code: tRNA(Ile)-lysidine synthase (471 aa).

35-40 is a binding site for ATP; that stretch reads SGGADS.

Belongs to the tRNA(Ile)-lysidine synthase family.

The protein resides in the cytoplasm. It catalyses the reaction cytidine(34) in tRNA(Ile2) + L-lysine + ATP = lysidine(34) in tRNA(Ile2) + AMP + diphosphate + H(+). In terms of biological role, ligates lysine onto the cytidine present at position 34 of the AUA codon-specific tRNA(Ile) that contains the anticodon CAU, in an ATP-dependent manner. Cytidine is converted to lysidine, thus changing the amino acid specificity of the tRNA from methionine to isoleucine. This chain is tRNA(Ile)-lysidine synthase, found in Geobacter sulfurreducens (strain ATCC 51573 / DSM 12127 / PCA).